Here is a 142-residue protein sequence, read N- to C-terminus: NADH-quinone oxidoreductase subunit A (142 aa).

Helical transmembrane passes span 8–28, 63–83, and 93–113; these read FGTV…GYLT, FYVV…LFPW, and FALI…VYAW.

The protein belongs to the complex I subunit 3 family. As to quaternary structure, NDH-1 is composed of 14 different subunits. Subunits NuoA, H, J, K, L, M, N constitute the membrane sector of the complex.

Its subcellular location is the cell inner membrane. It carries out the reaction a quinone + NADH + 5 H(+)(in) = a quinol + NAD(+) + 4 H(+)(out). Its function is as follows. NDH-1 shuttles electrons from NADH, via FMN and iron-sulfur (Fe-S) centers, to quinones in the respiratory chain. The immediate electron acceptor for the enzyme in this species is believed to be a menaquinone. Couples the redox reaction to proton translocation (for every two electrons transferred, four hydrogen ions are translocated across the cytoplasmic membrane), and thus conserves the redox energy in a proton gradient. The sequence is that of NADH-quinone oxidoreductase subunit A from Chlorobium phaeobacteroides (strain BS1).